Consider the following 87-residue polypeptide: Acyl-CoA-binding protein (87 aa).

An N-acetylserine modification is found at Ser2. Residues 2–87 form the ACB domain; that stretch reads SQAEFEKAAE…VEELKKKYGI (86 aa). An N6-acetyllysine; alternate modification is found at Lys8. Lys8 is modified (N6-succinyllysine; alternate). Residue Lys14 coordinates an acyl-CoA. Residue Lys17 is modified to N6-succinyllysine. Lys19 carries the post-translational modification N6-acetyllysine. Tyr29 bears the Phosphotyrosine mark. An acyl-CoA contacts are provided by residues 29–33, Lys51, Lys55, and Tyr74; that span reads YSHYK. Lys51 is modified (N6-acetyllysine). Lys55 carries the N6-acetyllysine; alternate modification. Position 55 is an N6-succinyllysine; alternate (Lys55). Lys55 is subject to N6-(2-hydroxyisobutyryl)lysine; alternate. At Lys55 the chain carries N6-malonyllysine; alternate. At Lys77 the chain carries N6-acetyllysine; alternate. An N6-succinyllysine; alternate modification is found at Lys77.

It belongs to the ACBP family. Monomer.

Its subcellular location is the endoplasmic reticulum. It localises to the golgi apparatus. In terms of biological role, binds medium- and long-chain acyl-CoA esters with very high affinity and may function as an intracellular carrier of acyl-CoA esters. It is also able to displace diazepam from the benzodiazepine (BZD) recognition site located on the GABA type A receptor. It is therefore possible that this protein also acts as a neuropeptide to modulate the action of the GABA receptor. Its function is as follows. DBI(32-86) has antibacterial properties. The sequence is that of Acyl-CoA-binding protein (DBI) from Sus scrofa (Pig).